The following is an 82-amino-acid chain: ATP synthase subunit c (82 aa).

2 helical membrane passes run 7-27 and 53-73; these read FVAL…CIGI and FLLA…AMMF.

It belongs to the ATPase C chain family. In terms of assembly, F-type ATPases have 2 components, F(1) - the catalytic core - and F(0) - the membrane proton channel. F(1) has five subunits: alpha(3), beta(3), gamma(1), delta(1), epsilon(1). F(0) has three main subunits: a(1), b(2) and c(10-14). The alpha and beta chains form an alternating ring which encloses part of the gamma chain. F(1) is attached to F(0) by a central stalk formed by the gamma and epsilon chains, while a peripheral stalk is formed by the delta and b chains.

The protein resides in the cell inner membrane. Its function is as follows. F(1)F(0) ATP synthase produces ATP from ADP in the presence of a proton or sodium gradient. F-type ATPases consist of two structural domains, F(1) containing the extramembraneous catalytic core and F(0) containing the membrane proton channel, linked together by a central stalk and a peripheral stalk. During catalysis, ATP synthesis in the catalytic domain of F(1) is coupled via a rotary mechanism of the central stalk subunits to proton translocation. In terms of biological role, key component of the F(0) channel; it plays a direct role in translocation across the membrane. A homomeric c-ring of between 10-14 subunits forms the central stalk rotor element with the F(1) delta and epsilon subunits. The chain is ATP synthase subunit c from Polaromonas sp. (strain JS666 / ATCC BAA-500).